The chain runs to 1375 residues: MGQLTKKFGKIEVTLPIPHLLNLQVDSYKKFLQEGAAALAPDEGLEGVFRSVFPIEDFNRTASLEYVSYEIGEPKYDQAECISKGLTYEAPIRIKVRLVVYDVDEDSENRTIRDIKEQDIYFGTLPLMTEKGTFIINGTERVIVNQLQRSPGIIFEHDAGKTHSSRKVLYSCRVIPMRGSWLDFDYDHKDILYVRIDRRRKMPATILFKAMGMSRSDILEYFYKKEYYTLEDDGRLMWELDKDLYRKDVAYADVADGEGKVIAKAGKPYTKRSWRLMLEAGIPAVEVAPDYIAGMFLAEDIVDEATGEVLAEAADEITLDLIDRLRECSIKRVPVLHTKGSDTSSSIRDTLLLDKTADQEQARVEIYRRLRPSSPPTPEIASTFFENLFRNPDYYDLSPVGRYKLNQRLGLTTTQERVLTDEDILTAIRVLNHLKDTHGPADDIDHLGNRRVRPVGELVENQYRIGLVRMERAIKERMSLQEVSTLMPHDLINPKPVQAVLKEFFGTSQLSQFMDQTNALSEVTHKRRLSALGPGGLTRERAGFEVRDVHTSHYGRICPIETPEGPNIGLIVSLTTYAKVNDFGFIETPYRVVRDGQVTDEVKYLDASSEHGEVVAQANARLDGDHRFVDEFVTTRVRGDVIMSPREEVTLMDISPSQMVSISAALIPFLEHDDANRALMGSNMQRQAVPLLRSTKPIVGTGMEADVARDSGACIIAEADGVVRYADADRIVVSYEGDLYPRTGGVRSYDLQKYHKSNQSSCFGQKPLVSRGQVIRKGDVLADGPGIEDGELALGKNLVVAFMPWCGYNFEDSILISERCVKEDVFTSVHIEEFEVVARDTKLGPEEITRDIPNVGEDMLRNLDGSGIIRIGANVKPDDILVGKITPKGETQLTPEEKLLRAIFGEKARDVKNTSLKVPPGIEGTVIDVKLFNRRSGEKDERTRNIEDYELARLDQKEKDHIRALTETTREKLAPVVVGKQLAYGLAGQKKGEVIAEAGQTLTAEMLEGLPVKKLSGLFKSKDTNEAVQQALESYDRQIEFINAMYESKREKVTEGDDLPPGVIKMAKVHIAVKRKLNVGDKMAGRHGNKGVVSCILPQEDMPFFADGRPVDIVLNPLGVPSRMNIGQIMETHLGWAAKEMGRKLALMLEHGQDLASVREQVKTVFASDAISSEVDNMDDETFVRSVRRLRDGIVTKTPVFDGATEEQIWSWMEQAGLANDGKTELYDGRTGVRFHNRVTTGVMYILKLHHLVDEKIHARSTGPYSLVTQQPLGGKAQFGGQRLGEMEVWALEAYGAAYLLQEFLTVKSDDVTGRVKMYEKVVKGDNFLEAGLPESFNVLVKELMSLGLDVTLHQEEGKKRTKRAGMTFGDGTSY.

This sequence belongs to the RNA polymerase beta chain family. As to quaternary structure, the RNAP catalytic core consists of 2 alpha, 1 beta, 1 beta' and 1 omega subunit. When a sigma factor is associated with the core the holoenzyme is formed, which can initiate transcription.

The catalysed reaction is RNA(n) + a ribonucleoside 5'-triphosphate = RNA(n+1) + diphosphate. In terms of biological role, DNA-dependent RNA polymerase catalyzes the transcription of DNA into RNA using the four ribonucleoside triphosphates as substrates. The protein is DNA-directed RNA polymerase subunit beta of Oleidesulfovibrio alaskensis (strain ATCC BAA-1058 / DSM 17464 / G20) (Desulfovibrio alaskensis).